Consider the following 363-residue polypeptide: DNA replication and repair protein RecF (363 aa).

30–37 (GSNGSGKT) contributes to the ATP binding site.

The protein belongs to the RecF family.

Its subcellular location is the cytoplasm. Its function is as follows. The RecF protein is involved in DNA metabolism; it is required for DNA replication and normal SOS inducibility. RecF binds preferentially to single-stranded, linear DNA. It also seems to bind ATP. The protein is DNA replication and repair protein RecF of Photorhabdus laumondii subsp. laumondii (strain DSM 15139 / CIP 105565 / TT01) (Photorhabdus luminescens subsp. laumondii).